The sequence spans 194 residues: Type II restriction enzyme OkrAI (194 aa).

Residues Glu71, Asp86, and Trp100 each contribute to the Mg(2+) site. Residue Glu101 is the Proton acceptor of the active site.

Homodimer. Requires Mg(2+) as cofactor.

It catalyses the reaction Endonucleolytic cleavage of DNA to give specific double-stranded fragments with terminal 5'-phosphates.. In terms of biological role, a P subtype restriction enzyme that recognizes the double-stranded sequence 5'-GGATCC-3' and cleaves after G-1. This is Type II restriction enzyme OkrAI from Oceanobacter kriegii (Oceanospirillum kriegii).